We begin with the raw amino-acid sequence, 289 residues long: 4-hydroxy-tetrahydrodipicolinate synthase (289 aa).

T43 serves as a coordination point for pyruvate. Y131 serves as the catalytic Proton donor/acceptor. K160 (schiff-base intermediate with substrate) is an active-site residue. V200 contributes to the pyruvate binding site.

It belongs to the DapA family. As to quaternary structure, homotetramer; dimer of dimers.

The protein localises to the cytoplasm. The enzyme catalyses L-aspartate 4-semialdehyde + pyruvate = (2S,4S)-4-hydroxy-2,3,4,5-tetrahydrodipicolinate + H2O + H(+). It participates in amino-acid biosynthesis; L-lysine biosynthesis via DAP pathway; (S)-tetrahydrodipicolinate from L-aspartate: step 3/4. Its function is as follows. Catalyzes the condensation of (S)-aspartate-beta-semialdehyde [(S)-ASA] and pyruvate to 4-hydroxy-tetrahydrodipicolinate (HTPA). This is 4-hydroxy-tetrahydrodipicolinate synthase from Methanococcus maripaludis (strain DSM 14266 / JCM 13030 / NBRC 101832 / S2 / LL).